Consider the following 202-residue polypeptide: Nitrophorin-3 (202 aa).

A signal peptide spans 1 to 23; that stretch reads MEPYSALLAVTILCLTSTMGVSG. 2 cysteine pairs are disulfide-bonded: cysteine 25/cysteine 144 and cysteine 62/cysteine 193. Histidine 80 is a heme binding site.

Belongs to the calycin superfamily. Nitrophorin family. Interacts weakly with host coagulation factor IX (F9) (inactive and activated) in the presence of Ca(2+). In terms of tissue distribution, salivary gland (at protein level).

The protein resides in the secreted. In terms of biological role, heme-based protein that deliver nitric oxide gas (NO) to the victim while feeding, resulting in vasodilation and inhibition of platelet aggregation. Reversibly binds nitric oxide (NO). Also binds tightly to histamine, which is released by the host to induce wound healing. Exhibits weak anticoagulant activity. The sequence is that of Nitrophorin-3 from Rhodnius prolixus (Triatomid bug).